The primary structure comprises 80 residues: Exodeoxyribonuclease 7 small subunit (80 aa).

Belongs to the XseB family. As to quaternary structure, heterooligomer composed of large and small subunits.

It localises to the cytoplasm. The catalysed reaction is Exonucleolytic cleavage in either 5'- to 3'- or 3'- to 5'-direction to yield nucleoside 5'-phosphates.. In terms of biological role, bidirectionally degrades single-stranded DNA into large acid-insoluble oligonucleotides, which are then degraded further into small acid-soluble oligonucleotides. The sequence is that of Exodeoxyribonuclease 7 small subunit from Pseudomonas putida (strain ATCC 700007 / DSM 6899 / JCM 31910 / BCRC 17059 / LMG 24140 / F1).